A 419-amino-acid polypeptide reads, in one-letter code: Histidine--tRNA ligase (419 aa).

It belongs to the class-II aminoacyl-tRNA synthetase family. Homodimer.

The protein resides in the cytoplasm. It catalyses the reaction tRNA(His) + L-histidine + ATP = L-histidyl-tRNA(His) + AMP + diphosphate + H(+). This is Histidine--tRNA ligase from Mycoplasmoides gallisepticum (strain R(low / passage 15 / clone 2)) (Mycoplasma gallisepticum).